Here is an 840-residue protein sequence, read N- to C-terminus: Putative pentatricopeptide repeat-containing protein At1g31840 (840 aa).

20 PPR repeats span residues 98-128 (KDPS…MITN), 145-179 (DADV…GVVI), 180-214 (PQDS…GIEP), 216-250 (GVSA…GFRV), 251-284 (GIVS…GPAP), 285-319 (NVVT…GIEP), 320-354 (DLIA…GVKL), 355-389 (DVVV…GISP), 390-424 (NVVT…GMEP), 425-459 (SIVT…GYPP), 460-494 (DVVI…SIRL), 495-529 (NVVV…GIKP), 530-564 (DVAT…GLEP), 565-599 (DALA…KISA), 600-634 (DIAV…KMEP), 635-669 (DIVT…PFGP), 670-704 (NTVT…GSKP), 705-739 (NAVT…GISP), 740-774 (SIVS…KLLP), and 775-809 (DVVA…GVKP).

This sequence belongs to the PPR family. P subfamily.

This is Putative pentatricopeptide repeat-containing protein At1g31840 from Arabidopsis thaliana (Mouse-ear cress).